We begin with the raw amino-acid sequence, 645 residues long: UvrABC system protein C (645 aa).

The disordered stretch occupies residues 1–20 (MTDLPPHSSHHPADQGEPLV). A GIY-YIG domain is found at 40–118 (YSPGVYRMLS…IKRMKPRFNI (79 aa)). The region spanning 228–263 (TELQQRLVAEMEQASQELNYERAASIRDRIRGFASI) is the UVR domain.

It belongs to the UvrC family. Interacts with UvrB in an incision complex.

Its subcellular location is the cytoplasm. In terms of biological role, the UvrABC repair system catalyzes the recognition and processing of DNA lesions. UvrC both incises the 5' and 3' sides of the lesion. The N-terminal half is responsible for the 3' incision and the C-terminal half is responsible for the 5' incision. The protein is UvrABC system protein C of Gluconobacter oxydans (strain 621H) (Gluconobacter suboxydans).